Reading from the N-terminus, the 150-residue chain is UPF0756 membrane protein HI_1074 (150 aa).

The next 4 membrane-spanning stretches (helical) occupy residues 1–21, 52–72, 81–101, and 123–143; these read MTLQ…LGVL, YGVK…LVSG, GFLS…AWLA, and IIGV…AGIL.

This sequence belongs to the UPF0756 family.

The protein resides in the cell membrane. This chain is UPF0756 membrane protein HI_1074, found in Haemophilus influenzae (strain ATCC 51907 / DSM 11121 / KW20 / Rd).